Here is a 429-residue protein sequence, read N- to C-terminus: ETS domain-containing protein Elk-1 (429 aa).

The ETS DNA-binding region spans 5–86 (VTLWQFLLQL…SGQKFVYKFV (82 aa)). Disordered regions lie at residues 119 to 146 (HAGPGDTATGKPGTPKGAGMTGQGGLAR), 165 to 204 (SLQPQPQPPIPPRPASVLPNTTPAGVPAPASGSRSTSPNP), and 227 to 253 (APNQKSEELSLDPSFGHPQPPEVKVEG). A compositionally biased stretch (pro residues) spans 169 to 178 (QPQPPIPPRP). Residues Lys-231, Lys-250, and Lys-255 each participate in a glycyl lysine isopeptide (Lys-Gly) (interchain with G-Cter in SUMO) cross-link. The span at 302-312 (STSTTEITQPQ) shows a compositional bias: polar residues. The disordered stretch occupies residues 302–354 (STSTTEITQPQKGRKPRDLELPLSPSLLGGQGPERTPGSGTSSGLQAPGPALT). Residue Ser-325 is modified to Phosphoserine; by MAPK1. 4 positions are modified to phosphothreonine; by MAPK1: Thr-337, Thr-354, Thr-364, and Thr-369. Residues 350-400 (GPALTPSLLPTHTLTPVLLTPSSLPPSIHFWSTLSPIAPRSPAKLSFQFPS) are sufficient for interaction with MAD2L2. The O-linked (GlcNAc) threonine glycan is linked to Thr-382. Ser-384 carries the phosphoserine; by MAPK1 and MAPK8 modification. At Ser-390 the chain carries Phosphoserine; by MAPK1. Thr-418 bears the Phosphothreonine; by MAPK1 mark. Position 423 is a phosphoserine; by MAPK1 (Ser-423).

This sequence belongs to the ETS family. In terms of assembly, interacts in its sumoylated form with PIAS2/PIASX which enhances its transcriptional activator activity. Interacts with MAD2L2; the interaction is direct and promotes phosphorylation by the kinases MAPK8 and/or MAPK9. Interacts with POU1F1. Sumoylation represses transcriptional activator activity as it results in recruitment of HDAC2 to target gene promoters which leads to decreased histone acetylation and reduced transactivator activity. It also regulates nuclear retention. In terms of processing, on mitogenic stimulation, phosphorylated on C-terminal serine and threonine residues by MAPK1 but also MAPK8 and/or MAPK9. Phosphorylation leads to loss of sumoylation and restores transcriptional activator activity. Phosphorylated and activated by CaMK4, MAPK11, MAPK12 and MAPK14. Upon bFGF stimulus, phosphorylated by PAK1. Phosphorylated by PRP4K at Thr-418; phosphorylation activation ELK1 transcriptional activity. In terms of tissue distribution, predominantly expressed in the brain, and to a lesser extent in the heart, liver and muscle.

The protein resides in the nucleus. Transcription factor that binds to purine-rich DNA sequences. Forms a ternary complex with SRF and the ETS and SRF motifs of the serum response element (SRE) on the promoter region of immediate early genes such as FOS and IER2. Induces target gene transcription upon JNK and MAPK-signaling pathways stimulation. This chain is ETS domain-containing protein Elk-1, found in Mus musculus (Mouse).